A 385-amino-acid polypeptide reads, in one-letter code: MSSSPVVSRDILEELQLYTAQNLEKLEVNKYYEVIRELGKGTYGKVDLVIHKIRGSKMALKFLKKKSTKLKSFLREYSISLYLSPCPFIINMFGIAFETDEYYVFAQEYAPSGDLFDIIPPQVGLPEPVAKRCVHQVAIALEYLHSKKLVHRDIKPENILIFDKECRKVKLSDFGMTRRAGSPVKRVSGTIPYTAPELCDTSKHDGFCVDYSTDVWAFGVLLFCMLTGNFPWEKAMPSDTFYEEFVRWQKRRTGAVPSQWRRFTDESLRMFRKLLALEQERRCSVKEVFAHLGHRWMLDGTSGNHHQSVLNSSSEEDELLVDRMKQQTLSPTANTSNAIEPGSANHFTSMSTNSSVSSTNSYERSARDSPPTSRILVTTPIEICV.

The Protein kinase domain maps to 32-297; the sequence is YEVIRELGKG…VFAHLGHRWM (266 aa). Residues 38–46 and K61 each bind ATP; that span reads LGKGTYGKV. The active-site Proton acceptor is the D153. Over residues 328 to 338 the composition is skewed to polar residues; that stretch reads TLSPTANTSNA. A disordered region spans residues 328 to 374; it reads TLSPTANTSNAIEPGSANHFTSMSTNSSVSSTNSYERSARDSPPTSR. The span at 348-361 shows a compositional bias: low complexity; the sequence is TSMSTNSSVSSTNS.

Belongs to the protein kinase superfamily. Ser/Thr protein kinase family. As to expression, mainly expressed in brain.

It localises to the cytoplasm. The enzyme catalyses L-seryl-[protein] + ATP = O-phospho-L-seryl-[protein] + ADP + H(+). It carries out the reaction L-threonyl-[protein] + ATP = O-phospho-L-threonyl-[protein] + ADP + H(+). May be involved in the control of neuronal proliferation or migration in the brain of embryos. In Danio rerio (Zebrafish), this protein is Serine/threonine-protein kinase SBK1 (sbk1).